Consider the following 155-residue polypeptide: Transcriptional repressor NrdR (155 aa).

Residues 1-22 form a disordered region; that stretch reads MRCPFCGHDETQVKDSRPSEDG. A zinc finger spans residues 3 to 34; sequence CPFCGHDETQVKDSRPSEDGAAIRRRRLCPQC. A compositionally biased stretch (basic and acidic residues) spans 7–22; that stretch reads GHDETQVKDSRPSEDG. The 91-residue stretch at 49–139 folds into the ATP-cone domain; sequence ITILKRSGRR…VYRDFRETQD (91 aa).

Belongs to the NrdR family. Zn(2+) serves as cofactor.

Functionally, negatively regulates transcription of bacterial ribonucleotide reductase nrd genes and operons by binding to NrdR-boxes. This chain is Transcriptional repressor NrdR, found in Phenylobacterium zucineum (strain HLK1).